Reading from the N-terminus, the 64-residue chain is Large ribosomal subunit protein bL32 (64 aa).

Residues Met-1–Ser-28 are disordered.

Belongs to the bacterial ribosomal protein bL32 family.

This chain is Large ribosomal subunit protein bL32 (rpmF), found in Xylella fastidiosa (strain 9a5c).